Reading from the N-terminus, the 1549-residue chain is Ferredoxin-dependent glutamate synthase (1549 aa).

Catalysis depends on C37, which acts as the For GATase activity. The Glutamine amidotransferase type-2 domain occupies 37–435 (CGVGFIAHLD…PGEMIVLDLQ (399 aa)). 1116 to 1173 (LHEVHCLLVENNLREKVILRVDGGLRTGQDVVMAALLGADEYGFGTIAMIAGGCIMAR) is an FMN binding site. [3Fe-4S] cluster contacts are provided by C1169, C1175, and C1180.

This sequence belongs to the glutamate synthase family. In terms of assembly, monomer. It depends on [3Fe-4S] cluster as a cofactor. FAD is required as a cofactor. The cofactor is FMN.

The protein resides in the plastid. It is found in the chloroplast stroma. The catalysed reaction is 2 oxidized [2Fe-2S]-[ferredoxin] + 2 L-glutamate = L-glutamine + 2 reduced [2Fe-2S]-[ferredoxin] + 2-oxoglutarate + 2 H(+). It functions in the pathway amino-acid biosynthesis; L-glutamate biosynthesis via GLT pathway; L-glutamate from 2-oxoglutarate and L-glutamine (ferredoxin route): step 1/1. It participates in energy metabolism; nitrogen metabolism. The sequence is that of Ferredoxin-dependent glutamate synthase (gltB) from Cyanidium caldarium (Red alga).